The chain runs to 338 residues: GTPase Obg (338 aa).

One can recognise an Obg domain in the interval 1–159; that stretch reads MQFIDQAEIE…RRIRLELKLL (159 aa). The region spanning 160–328 is the OBG-type G domain; it reads AEVGIIGLPN…MLQATWEQLD (169 aa). GTP-binding positions include 166–173, 191–195, 213–216, 280–283, and 309–311; these read GLPNAGKS, FTTLI, DIPG, NKLD, and SAV. Residues Ser-173 and Thr-193 each contribute to the Mg(2+) site.

This sequence belongs to the TRAFAC class OBG-HflX-like GTPase superfamily. OBG GTPase family. In terms of assembly, monomer. Mg(2+) serves as cofactor.

It localises to the cytoplasm. Functionally, an essential GTPase which binds GTP, GDP and possibly (p)ppGpp with moderate affinity, with high nucleotide exchange rates and a fairly low GTP hydrolysis rate. Plays a role in control of the cell cycle, stress response, ribosome biogenesis and in those bacteria that undergo differentiation, in morphogenesis control. The chain is GTPase Obg from Gloeothece citriformis (strain PCC 7424) (Cyanothece sp. (strain PCC 7424)).